The following is a 436-amino-acid chain: GTPase Der (436 aa).

2 consecutive EngA-type G domains span residues 3–167 (NIVA…PIKP) and 177–352 (PRFA…ENRQ). GTP contacts are provided by residues 9-16 (GRPNVGKS), 56-60 (DTGGY), 119-122 (NKVD), 183-190 (GRPNAGKS), 230-234 (DTAGI), and 295-298 (NKWD). In terms of domain architecture, KH-like spans 353 to 436 (QRISTSKFNE…VPIDIYIREK (84 aa)).

The protein belongs to the TRAFAC class TrmE-Era-EngA-EngB-Septin-like GTPase superfamily. EngA (Der) GTPase family. As to quaternary structure, associates with the 50S ribosomal subunit.

GTPase that plays an essential role in the late steps of ribosome biogenesis. The chain is GTPase Der from Flavobacterium psychrophilum (strain ATCC 49511 / DSM 21280 / CIP 103535 / JIP02/86).